Here is a 193-residue protein sequence, read N- to C-terminus: Probable nicotinate-nucleotide adenylyltransferase (193 aa).

The protein belongs to the NadD family.

The catalysed reaction is nicotinate beta-D-ribonucleotide + ATP + H(+) = deamido-NAD(+) + diphosphate. It participates in cofactor biosynthesis; NAD(+) biosynthesis; deamido-NAD(+) from nicotinate D-ribonucleotide: step 1/1. Functionally, catalyzes the reversible adenylation of nicotinate mononucleotide (NaMN) to nicotinic acid adenine dinucleotide (NaAD). The polypeptide is Probable nicotinate-nucleotide adenylyltransferase (Borreliella afzelii (strain PKo) (Borrelia afzelii)).